The primary structure comprises 1228 residues: MDRKKAVKLATASAIAASAFVAANPNASEAATDVATVVSQAKAQFKKAYYTYSHTVTETGEFPNINDVYAEYNKAKKRYRDAVALVNKAGGAKKDAYLADLQKEYETYVFKANPKSGEARVATYIDAYNYATKLDEMRQELEAAVQAKDLEKAEQYYHKIPYEIKTRTVILDRVYGKTTRDLLRSTFKAKAQELRDSLIYDITVAMKAREVQDAVKAGNLDKAKAAVDQINQYLPKVTDAFKTELTEVAKKALDADEAALTPKVESVSAINTQNKAVELTAVPVNGTLKLQLSAAANEDTVNVNTVRIYKVDGNIPFALNTADVSLSTDGKTITVDASTPFENNTEYKVVVKGIKDKNGKEFKEDAFTFKLRNDAVVTQVFGTNVTNNTSVNLAAGTFDTDDTLTVVFDKLLAPETVNSSNVTITDVETGKRIPVIASTSGSTITITLKEALVTGKQYKLAINNVKTLTGYNAEAYELVFTANASAPTVATAPTTLGGTTLSTGSLTTNVWGKLAGGVNEAGTYYPGLQFTTTFATKLDESTLADNFVLVEKESGTVVASELKYNADAKMVTLVPKADLKENTIYQIKIKKGLKSDKGIELGTVNEKTYEFKTQDLTAPTVISVTSKNGDAGLKVTEAQEFTVKFSENLNTFNATTVSGSTITYGQVAVVKAGANLSALTASDIIPASVEAVTGQDGTYKVKVAANQLERNQGYKLVVFGKGATAPVKDAANANTLATNYIYTFTTEGQDVTAPTVTKVFKGDSLKDADAVTTLTNVDAGQKFTIQFSEELKTSSGSLVGGKVTVEKLTNNGWVDAGTGTTVSVAPKTDANGKVTAAVVTLTGLDNNDKDAKLRLVVDKSSTDGIADVAGNVIKEKDILIRYNSWRHTVASVKAAADKDGQNASAAFPTSTAIDTTKSLLVEFNETDLAEVKPENIVVKDAAGNAVAGTVTALDGSTNKFVFTPSQELKAGTVYSVTIDGVRDKVGNTISKYITSFKTVSANPTLSSISIADGAVNVDRSKTITIEFSDSVPNPTITLKKADGTSFTNYTLVNVNNENKTYKIVFHKGVTLDEFTQYELAVSKDFQTGTDIDSKVTFITGSVATDEVKPALVGVGSWNGTSYTQDAAATRLRSVADFVAEPVALQFSEGIDLTNATVTVTNITDDKTVEVISKESVDADHDAGATKETLVINTVTPLVLDNSKTYKIVVSGVKDAAGNVADTITFYIK.

An N-terminal signal peptide occupies residues 1–30; it reads MDRKKAVKLATASAIAASAFVAANPNASEA.

Its subcellular location is the secreted. It is found in the cell wall. The protein localises to the S-layer. Its function is as follows. The S-layer is a paracrystalline mono-layered assembly of proteins which coat the surface of bacteria. This is S-layer protein (sbsA) from Geobacillus stearothermophilus (Bacillus stearothermophilus).